The following is a 117-amino-acid chain: UPF0251 protein cbdbA217 (117 aa).

Belongs to the UPF0251 family.

The sequence is that of UPF0251 protein cbdbA217 from Dehalococcoides mccartyi (strain CBDB1).